The following is a 148-amino-acid chain: SsrA-binding protein (148 aa).

Belongs to the SmpB family.

It localises to the cytoplasm. Its function is as follows. Required for rescue of stalled ribosomes mediated by trans-translation. Binds to transfer-messenger RNA (tmRNA), required for stable association of tmRNA with ribosomes. tmRNA and SmpB together mimic tRNA shape, replacing the anticodon stem-loop with SmpB. tmRNA is encoded by the ssrA gene; the 2 termini fold to resemble tRNA(Ala) and it encodes a 'tag peptide', a short internal open reading frame. During trans-translation Ala-aminoacylated tmRNA acts like a tRNA, entering the A-site of stalled ribosomes, displacing the stalled mRNA. The ribosome then switches to translate the ORF on the tmRNA; the nascent peptide is terminated with the 'tag peptide' encoded by the tmRNA and targeted for degradation. The ribosome is freed to recommence translation, which seems to be the essential function of trans-translation. The polypeptide is SsrA-binding protein (Azoarcus sp. (strain BH72)).